A 169-amino-acid polypeptide reads, in one-letter code: Phosphopantetheine adenylyltransferase (169 aa).

Ser10 is a binding site for substrate. Residues 10-11 (SF) and His18 each bind ATP. Substrate is bound by residues Lys42, Leu74, and Arg88. ATP-binding positions include 89–91 (GLR), Glu99, and 124–130 (YAFLSSS).

This sequence belongs to the bacterial CoaD family. As to quaternary structure, homohexamer. Mg(2+) serves as cofactor.

The protein resides in the cytoplasm. It catalyses the reaction (R)-4'-phosphopantetheine + ATP + H(+) = 3'-dephospho-CoA + diphosphate. The protein operates within cofactor biosynthesis; coenzyme A biosynthesis; CoA from (R)-pantothenate: step 4/5. Reversibly transfers an adenylyl group from ATP to 4'-phosphopantetheine, yielding dephospho-CoA (dPCoA) and pyrophosphate. In Geobacillus sp. (strain WCH70), this protein is Phosphopantetheine adenylyltransferase.